The chain runs to 362 residues: Sphingosine 1-phosphate receptor 1 (362 aa).

At 1–25 (MDDLIARHYNFTGKFRKVHKDPGLK) the chain is on the extracellular side. N-linked (GlcNAc...) asparagine glycosylation is present at asparagine 10. A helical transmembrane segment spans residues 26–47 (ADSVVFIIVCCFIILENVLVLL). The Cytoplasmic portion of the chain corresponds to 48-61 (TIWRTKKFHKPMYY). A helical membrane pass occupies residues 62-83 (FIGNLALSDLLAGVVYTANILL). The Extracellular segment spans residues 84–95 (SGANTYKLTPTQ). A helical membrane pass occupies residues 96 to 117 (WFFREGSMFVALAASVFSLLAI). 99–100 (RE) contributes to the sphing-4-enine 1-phosphate binding site. Topologically, residues 118-139 (AIERHLTMLKMKLHNNGKTCRV) are cytoplasmic. The chain crosses the membrane as a helical span at residues 140 to 161 (FMLISTVWFIAAILGGLPVMGW). Residues 162-175 (NCIDSMNNCSTVLP) lie on the Extracellular side of the membrane. Cysteines 163 and 170 form a disulfide. Asparagine 169 carries an N-linked (GlcNAc...) asparagine glycan. The helical transmembrane segment at 176–203 (LYHKAYILFCTTVFSVILMAIVILYARI) threads the bilayer. The Cytoplasmic segment spans residues 204 to 238 (YALVRTRSRKLVFRKVANGRGSNKSSEKSMALLKT). A helical membrane pass occupies residues 239 to 259 (VIIVLSCFIACWAPLFILLLL). 246-250 (FIACW) contacts sphing-4-enine 1-phosphate. The Extracellular segment spans residues 260–270 (DVACQTLTCSI). A disulfide bridge links cysteine 263 with cysteine 268. A helical membrane pass occupies residues 271 to 291 (LYKAEWFLALAVLNSAMNPLI). The Cytoplasmic portion of the chain corresponds to 292-362 (YTLTSNEMRR…VSSGNITSSS (71 aa)). Cysteine 309 carries the S-palmitoyl cysteine lipid modification. The tract at residues 328-362 (FSRSKSDNSSHPNKDEPEYSPRETIVSSGNITSSS) is disordered. Basic and acidic residues predominate over residues 329–348 (SRSKSDNSSHPNKDEPEYSP). Over residues 352–362 (IVSSGNITSSS) the composition is skewed to polar residues.

This sequence belongs to the G-protein coupled receptor 1 family.

Its subcellular location is the cell membrane. In terms of biological role, G-protein coupled receptor for the bioactive lysosphingolipid sphingosine 1-phosphate (S1P) that seems to be coupled to the G(i) subclass of heteromeric G proteins. Signaling leads to the activation of RAC1, SRC, PTK2/FAK1 and MAP kinases. Plays an important role in cell migration, probably via its role in the reorganization of the actin cytoskeleton and the formation of lamellipodia in response to stimuli that increase the activity of the sphingosine kinase SPHK1. Required for normal chemotaxis toward sphingosine 1-phosphate. This is Sphingosine 1-phosphate receptor 1 (s1pr1) from Danio rerio (Zebrafish).